A 444-amino-acid polypeptide reads, in one-letter code: Phosphoribosylamine--glycine ligase (444 aa).

The region spanning 109–324 (RNLFKKYEID…FLDVCFAIAE (216 aa)) is the ATP-grasp domain. 140 to 202 (MTSLGKDVVV…EEKLVGVEFT (63 aa)) lines the ATP pocket. Gln-282, Glu-294, and Asn-296 together coordinate Mg(2+). Mn(2+)-binding residues include Gln-282, Glu-294, and Asn-296.

Belongs to the GARS family. Mg(2+) serves as cofactor. The cofactor is Mn(2+).

It carries out the reaction 5-phospho-beta-D-ribosylamine + glycine + ATP = N(1)-(5-phospho-beta-D-ribosyl)glycinamide + ADP + phosphate + H(+). It participates in purine metabolism; IMP biosynthesis via de novo pathway; N(1)-(5-phospho-D-ribosyl)glycinamide from 5-phospho-alpha-D-ribose 1-diphosphate: step 2/2. This Methanococcus maripaludis (strain C5 / ATCC BAA-1333) protein is Phosphoribosylamine--glycine ligase.